The following is an 804-amino-acid chain: Phenylalanine--tRNA ligase beta subunit (804 aa).

The tRNA-binding domain maps to 38 to 148; it reads RSYLKGFVIA…EDVPIGASFA (111 aa). Residues 401–476 form the B5 domain; sequence PEIRQITFPL…RIYGLDKIKP (76 aa). Mg(2+) is bound by residues Asp-454, Asp-460, Glu-463, and Glu-464. The FDX-ACB domain maps to 710–803; that stretch reads SSLQMVRRDF…VTRMTGASLR (94 aa).

It belongs to the phenylalanyl-tRNA synthetase beta subunit family. Type 1 subfamily. As to quaternary structure, tetramer of two alpha and two beta subunits. It depends on Mg(2+) as a cofactor.

It is found in the cytoplasm. It carries out the reaction tRNA(Phe) + L-phenylalanine + ATP = L-phenylalanyl-tRNA(Phe) + AMP + diphosphate + H(+). The protein is Phenylalanine--tRNA ligase beta subunit of Bartonella henselae (strain ATCC 49882 / DSM 28221 / CCUG 30454 / Houston 1) (Rochalimaea henselae).